A 2287-amino-acid chain; its full sequence is Protein Ycf2 (2287 aa).

1641–1648 (GSIGTGRS) is an ATP binding site.

It belongs to the Ycf2 family.

It localises to the plastid. The protein resides in the chloroplast stroma. Probable ATPase of unknown function. Its presence in a non-photosynthetic plant (Epifagus virginiana) and experiments in tobacco indicate that it has an essential function which is probably not related to photosynthesis. The sequence is that of Protein Ycf2 from Lepidium virginicum (Virginia pepperweed).